We begin with the raw amino-acid sequence, 119 residues long: UPF0102 protein FN1370 (119 aa).

The protein belongs to the UPF0102 family.

This Fusobacterium nucleatum subsp. nucleatum (strain ATCC 25586 / DSM 15643 / BCRC 10681 / CIP 101130 / JCM 8532 / KCTC 2640 / LMG 13131 / VPI 4355) protein is UPF0102 protein FN1370.